A 258-amino-acid polypeptide reads, in one-letter code: uncharacterized protein (258 aa).

A run of 3 helical transmembrane segments spans residues 38 to 58, 72 to 92, and 111 to 131; these read VFGL…LFIA, ALIF…IIFI, and FLVI…MLWW.

It is found in the cell membrane. This is an uncharacterized protein from Mycoplasma pneumoniae (strain ATCC 29342 / M129 / Subtype 1) (Mycoplasmoides pneumoniae).